Consider the following 176-residue polypeptide: Large ribosomal subunit protein eL6 (176 aa).

The segment at 1 to 27 is disordered; the sequence is MSQVAPKWYQSEDVPAPKQTRKTARPQ.

This sequence belongs to the eukaryotic ribosomal protein eL6 family. In terms of assembly, component of the large ribosomal subunit. Mature ribosomes consist of a small (40S) and a large (60S) subunit. The 40S subunit contains about 32 different proteins and 1 molecule of RNA (18S). The 60S subunit contains 45 different proteins and 3 molecules of RNA (25S, 5.8S and 5S).

The protein localises to the cytoplasm. Component of the ribosome, a large ribonucleoprotein complex responsible for the synthesis of proteins in the cell. The small ribosomal subunit (SSU) binds messenger RNAs (mRNAs) and translates the encoded message by selecting cognate aminoacyl-transfer RNA (tRNA) molecules. The large subunit (LSU) contains the ribosomal catalytic site termed the peptidyl transferase center (PTC), which catalyzes the formation of peptide bonds, thereby polymerizing the amino acids delivered by tRNAs into a polypeptide chain. The nascent polypeptides leave the ribosome through a tunnel in the LSU and interact with protein factors that function in enzymatic processing, targeting, and the membrane insertion of nascent chains at the exit of the ribosomal tunnel. This is Large ribosomal subunit protein eL6 from Candida albicans (strain SC5314 / ATCC MYA-2876) (Yeast).